A 182-amino-acid polypeptide reads, in one-letter code: Ribosome maturation factor RimM (182 aa).

The 81-residue stretch at 102–182 (GEGDYYWKDL…TIEVDWDPGF (81 aa)) folds into the PRC barrel domain.

Belongs to the RimM family. In terms of assembly, binds ribosomal protein uS19.

Its subcellular location is the cytoplasm. Its function is as follows. An accessory protein needed during the final step in the assembly of 30S ribosomal subunit, possibly for assembly of the head region. Essential for efficient processing of 16S rRNA. May be needed both before and after RbfA during the maturation of 16S rRNA. It has affinity for free ribosomal 30S subunits but not for 70S ribosomes. This chain is Ribosome maturation factor RimM, found in Pectobacterium carotovorum subsp. carotovorum (strain PC1).